A 409-amino-acid polypeptide reads, in one-letter code: LysM domain-containing GPI-anchored protein LYP6 (409 aa).

The signal sequence occupies residues 1-27 (MAGWPAAEAAGALVVAILAAAAGGAAG). 4 disulfides stabilise this stretch: Cys34–Cys100, Cys40–Cys166, Cys98–Cys164, and Cys100–Cys166. The 51-residue stretch at 110–160 (VRYSARPADTLASVADVVFAGLASADQIRTANGLSAEDPDAPLDAGATLVV) folds into the LysM 1 domain. The N-linked (GlcNAc...) asparagine glycan is linked to Asn168. The 44-residue stretch at 179-222 (LSYVVRVGDTVQSIAATHATTVTDISNVNAMGSPIVAPGDILAI) folds into the LysM 2 domain. 2 disulfides stabilise this stretch: Cys227–Cys259 and Cys254–Cys282. N-linked (GlcNAc...) asparagine glycosylation is present at Asn244. 3 N-linked (GlcNAc...) asparagine glycosylation sites follow: Asn291, Asn302, and Asn313. The interval 353–387 (SPAPGAGEAGGDIPGFPGSSNVSPANGPSGSVSQA) is disordered. A compositionally biased stretch (polar residues) spans 370–387 (GSSNVSPANGPSGSVSQA). A lipid anchor (GPI-anchor amidated alanine) is attached at Ala387. The propeptide at 388-409 (ASVNRPHQIVALILSVALYFQM) is removed in mature form.

As to quaternary structure, interacts with LYP4. Interacts with CERK1. Interacts with CEBIP. As to expression, expressed in roots and leaves.

Its subcellular location is the cell membrane. Its function is as follows. Functions in innate immunity. Functions as a pattern recognition receptor (PRR), sensing bacterial peptidoglycan (PGN) and fungal chitin at the cell surface. Involved in resistance against the bacterial pathogen Xanthomonas oryzae pv. oryzae (Xoo) and the fungal pathogen Magnaporthe oryzae. Binds PGN and fungal chitin in vitro. Involved in microbe-associated molecular patterns (MAMPs) perception and participates in the activation of defense genes against the bacterial pathogen Xanthomonas oryzae pv. oryzicola (Xoc) or the fungal pathogen Magnaporthe oryzae. The chain is LysM domain-containing GPI-anchored protein LYP6 from Oryza sativa subsp. japonica (Rice).